Reading from the N-terminus, the 126-residue chain is UPF0538 protein C2orf76 (126 aa).

The protein belongs to the UPF0538 family.

The chain is UPF0538 protein C2orf76 (C2orf76) from Homo sapiens (Human).